Here is a 504-residue protein sequence, read N- to C-terminus: Cytochrome P450 monooxygenase gsfF (504 aa).

Residues 1 to 16 (MTVLFILSAGLVAVFG) form the signal peptide. N-linked (GlcNAc...) asparagine glycans are attached at residues Asn97 and Asn150. Cys450 contributes to the heme binding site.

It belongs to the cytochrome P450 family. It depends on heme as a cofactor.

It carries out the reaction griseophenone B + reduced [NADPH--hemoprotein reductase] + O2 + H(+) = desmethyl-dehydrogriseofulvin + oxidized [NADPH--hemoprotein reductase] + 2 H2O. Its pathway is secondary metabolite biosynthesis; terpenoid biosynthesis. Functionally, cytochrome P450 monooxygenase; part of the gene cluster that mediates the biosynthesis of griseofulvin, an important antifungal drug that has been in use for a long time for treating dermatophyte infections. The first step of the pathway is the formation of the heptaketide backbone by gsfA which is initiated by priming with acetyl-CoA, followed by sequential condensations of 6 malonyl-CoA units. The resulting benzophenone can undergo a spontaneous dehydration to form norlichexanthone. However, the true precursor for the griseofulvin biosynthesis is not norlichexanthone, but the heptaketide benzophenone that is O-methylated at 3-OH by gsfB to produce griseophenone D which is further methylated at 9-OH by gsfC to yield griseophenone C. Griseophenone C is then substrate of halogenase gsfI which is responsible for the regio-specific chlorination at the C13 position to form griseophenone B. The cytochrome P450 gsfF catalyzes the coupling of orcinol and phloroglucinol rings in griseophenone B to form desmethyl-dehydrogriseofulvin A which is further methylated at 5-OH by gsfD to yield dehydrogriseofulvin. Finally, gsfE performs stereospecific reduction of enone 18 of dehydrogriseofulvin to afford the final product griseofulvin. This chain is Cytochrome P450 monooxygenase gsfF, found in Penicillium aethiopicum.